We begin with the raw amino-acid sequence, 1002 residues long: MPTPVTTARQCLTEETARALDDAVSVARRRSHAQTTSLHAVSGLLTMPSSILREVCISRAAHNTPYSSRLQFRALELCVGVSLDRLPSSKSTPTTTVEEDPPVSNSLMAAIKRSQATQRRHPETYHLHQIHGNNNTETTSVLKVELKYFILSILDDPIVSRVFGEAGFRSTDIKLDVLHPPVTSQFSSRFTSRSRIPPLFLCNLPESDSGRVRFGFPFGDLDENCRRIGEVLARKDKKNPLLVGVCGVEALKTFTDSINRGKFGFLPLEISGLSVVSIKISEVLVDGSRIDIKFDDLGRLKSGMVLNLGELKVLASDVFSVDVIEKFVLKLADLLKLHREKLWFIGSVSSNETYLKLIERFPTIDKDWNLHLLPITSSSQGLYPKSSLMGSFVPFGGFFSSTSDFRIPSSSSMNQTLPRCHLCNEKYEQEVTAFAKSGSMIDDQCSEKLPSWLRNVEHEHEKGNLGKVKDDPNVLASRIPALQKKWDDICQRIHQTPAFPKLSFQPVRPQFPLQLGSSSQTKMSLGSPTEKIVCTRTSESFQGMVALPQNPPHQPGLSVKISKPKHTEDLSSSTTNSPLSFVTTDLGLGTIYASKNQEPSTPVSVERRDFEVIKEKQLLSASRYCKDFKSLRELLSRKVGFQNEAVNAISEIVCGYRDESRRRNNHVATTSNVWLALLGPDKAGKKKVALALAEVFCGGQDNFICVDFKSQDSLDDRFRGKTVVDYIAGEVARRADSVVFIENVEKAEFPDQIRLSEAMRTGKLRDSHGREISMKNVIVVATISGSDKASDCHVLEEPVKYSEERVLNAKNWTLQIKLADTSNVNKNGPNKRRQEEAETEVTELRALKSQRSFLDLNLPVDEIEANEDEAYTMSENTEAWLEDFVEQVDGKVTFKLIDFDELAKNIKRNILSLFHLSFGPETHLEIENDVILKILAALRWSSDEEKTFDQWLQTVLAPSFAKARQKCVPAAPFSVKLVASRESPAEEETTGIQQFPARVEVI.

The Clp R domain occupies 8-185; sequence ARQCLTEETA…DVLHPPVTSQ (178 aa). Repeat regions lie at residues 12–86 and 103–185; these read LTEE…LDRL and VSNS…VTSQ. Residues 854–858 carry the EAR motif; that stretch reads LDLNL.

It belongs to the ClpA/ClpB family. As to quaternary structure, interacts with TPL/TPR in an EAR-motif dependent manner. Interacts with TPL, TPR1, TPR2 and TPR4. Interacts with MAX2 and TPR2. Interacts with D14. The interaction with D14 occurs in the presence of (2'R) stereoisomers of strigolactones, but not (2'S) stereoisomers. In terms of processing, ubiquitinated upon strigolactone treatment. Strigolactone, but not karrikin, triggers rapid SCF(MAX2)-dependent degradation. As to expression, expressed in axillary branches and roots. Detected in seedlings and leaves. Expressed in the primary rosette buds and expanding leaves of adult rosettes, the vasculature of the hypocotyls, cotyledons, and mature roots, and in the midvein and petioles of young leaves.

The protein resides in the nucleus. Its function is as follows. Probable component of a transcriptional corepressor complex involved in branching control. Regulates cotyledon expansion and lateral root growth, but not germination or hypocotyl elongation. Promotes auxin transport and PIN1 accumulation in the stem and represses BRC1/TCP18 expression in axillary buds. This is Protein SMAX1-LIKE 7 from Arabidopsis thaliana (Mouse-ear cress).